The chain runs to 468 residues: Phosphatidylinositol-binding clathrin assembly protein LAP (468 aa).

The 143-residue stretch at 16–158 (RHSLAGQGLA…LSYRAMAFDF (143 aa)) folds into the ENTH domain. Positions 438 to 468 (NAGDGTAKYDGGAGSSPFDWGATDDDGGAAQ) are disordered. Residues 459–468 (ATDDDGGAAQ) are compositionally biased toward acidic residues.

It belongs to the PICALM/SNAP91 family. Binds clathrin and phosphatidylinositol 4,5-bisphosphate. In embryos, expression is seen in central and peripheral nervous systems (brain and ventral nerve cord) and Garland cells. Coexpressed with clathrin at presynaptic boutons of neuromuscular junctions.

The protein localises to the membrane. It localises to the clathrin-coated pit. Its subcellular location is the golgi apparatus. The protein resides in the cytoplasmic vesicle. It is found in the clathrin-coated vesicle. Functionally, assembly protein recruiting clathrin and adaptor protein complex 2 (AP2) to cell membranes at sites of coated-pit formation and clathrin-vesicle assembly. May be required to determine the amount of membrane to be recycled, possibly by regulating the size of the clathrin cage. Involved in AP2-dependent clathrin-mediated endocytosis at the neuromuscular junction. The sequence is that of Phosphatidylinositol-binding clathrin assembly protein LAP (lap) from Drosophila melanogaster (Fruit fly).